Reading from the N-terminus, the 100-residue chain is Large ribosomal subunit protein bL27 (100 aa).

The propeptide occupies 1–9 (MLSINLSLC).

It belongs to the bacterial ribosomal protein bL27 family. The N-terminus is cleaved by ribosomal processing cysteine protease Prp.

This Clostridium acetobutylicum (strain ATCC 824 / DSM 792 / JCM 1419 / IAM 19013 / LMG 5710 / NBRC 13948 / NRRL B-527 / VKM B-1787 / 2291 / W) protein is Large ribosomal subunit protein bL27.